The primary structure comprises 220 residues: Uracil-DNA glycosylase (220 aa).

Aspartate 65 serves as the catalytic Proton acceptor.

This sequence belongs to the uracil-DNA glycosylase (UDG) superfamily. UNG family.

The protein resides in the cytoplasm. It carries out the reaction Hydrolyzes single-stranded DNA or mismatched double-stranded DNA and polynucleotides, releasing free uracil.. In terms of biological role, excises uracil residues from the DNA which can arise as a result of misincorporation of dUMP residues by DNA polymerase or due to deamination of cytosine. This Leuconostoc mesenteroides subsp. mesenteroides (strain ATCC 8293 / DSM 20343 / BCRC 11652 / CCM 1803 / JCM 6124 / NCDO 523 / NBRC 100496 / NCIMB 8023 / NCTC 12954 / NRRL B-1118 / 37Y) protein is Uracil-DNA glycosylase.